A 678-amino-acid chain; its full sequence is Glutamate--cysteine ligase (678 aa).

The protein belongs to the glutamate--cysteine ligase type 3 family.

It carries out the reaction L-cysteine + L-glutamate + ATP = gamma-L-glutamyl-L-cysteine + ADP + phosphate + H(+). It participates in sulfur metabolism; glutathione biosynthesis; glutathione from L-cysteine and L-glutamate: step 1/2. Feedback inhibition by glutathione. In terms of biological role, catalyzes the ATP-dependent condensation of cysteine and glutamate to form the dipeptide gamma-glutamylcysteine (gamma-GC), the first and rate-limiting step in the production of glutathione (GSH). The chain is Glutamate--cysteine ligase (GSH1) from Saccharomyces cerevisiae (strain ATCC 204508 / S288c) (Baker's yeast).